Consider the following 381-residue polypeptide: Homoserine O-succinyltransferase (381 aa).

The AB hydrolase-1 domain maps to 53-361; sequence ILICHALSGS…DSVHGHDAFL (309 aa). S157 serves as the catalytic Nucleophile. Residue R227 participates in substrate binding. Catalysis depends on residues D324 and H357. D358 serves as a coordination point for substrate.

The protein belongs to the AB hydrolase superfamily. MetX family. Homodimer.

Its subcellular location is the cytoplasm. It catalyses the reaction L-homoserine + succinyl-CoA = O-succinyl-L-homoserine + CoA. It participates in amino-acid biosynthesis; L-methionine biosynthesis via de novo pathway; O-succinyl-L-homoserine from L-homoserine: step 1/1. In terms of biological role, transfers a succinyl group from succinyl-CoA to L-homoserine, forming succinyl-L-homoserine. This is Homoserine O-succinyltransferase from Saccharophagus degradans (strain 2-40 / ATCC 43961 / DSM 17024).